Reading from the N-terminus, the 344-residue chain is Outer membrane protein B (344 aa).

A signal peptide spans 1–30 (MNSKMLKHLRLATLSFSMFFGIVSSPAVYA).

It belongs to the chlamydial OMP family.

The protein localises to the cell outer membrane. This is Outer membrane protein B (ompB) from Chlamydia pneumoniae (Chlamydophila pneumoniae).